A 64-amino-acid polypeptide reads, in one-letter code: Large ribosomal subunit protein bL35 (64 aa).

Basic residues-rich tracts occupy residues 1-15 (MPKN…KRFK) and 27-42 (AGKR…KKTR). Residues 1-45 (MPKNKTHSGASKRFKITGSGKVLRERAGKRHLLEHKSSKKTRSLT) are disordered.

This sequence belongs to the bacterial ribosomal protein bL35 family.

The sequence is that of Large ribosomal subunit protein bL35 from Streptomyces griseus subsp. griseus (strain JCM 4626 / CBS 651.72 / NBRC 13350 / KCC S-0626 / ISP 5235).